The following is a 539-amino-acid chain: Fusion glycoprotein F0 (539 aa).

The first 18 residues, 1 to 18 (MPTSILLIITTMIMASFC), serve as a signal peptide directing secretion. The Extracellular segment spans residues 19–493 (QIDITKLQHV…IGNWHQSSTT (475 aa)). A disulfide bond links Cys63 and Cys192. Residues 110–134 (FFGGVIGTIALGVATSAQITAAVAL) form a fusion peptide region. Residues 135–163 (VEAKQARSDIEKLKEAIRDTNKAVQSVQS) adopt a coiled-coil conformation. Asn238 carries N-linked (GlcNAc...) asparagine; by host glycosylation. Disulfide bonds link Cys331–Cys340, Cys355–Cys363, Cys387–Cys392, and Cys394–Cys417. Asn359 carries N-linked (GlcNAc...) asparagine; by host glycosylation. Residue Asn446 is glycosylated (N-linked (GlcNAc...) asparagine; by host). Residues 459–484 (ELNKAKSDLEESKEWIRRSNQKLDSI) are a coiled coil. The helical transmembrane segment at 494–514 (IIIVLIMIIILFIINVTIIII) threads the bilayer. Topologically, residues 515-539 (AVKYYRIQKRNRVDQNDKPYVLTNK) are cytoplasmic.

The protein belongs to the paramyxoviruses fusion glycoprotein family. As to quaternary structure, homotrimer of disulfide-linked F1-F2. In terms of processing, the inactive precursor F0 is glycosylated and proteolytically cleaved into F1 and F2 to be functionally active. The cleavage is mediated by cellular proteases during the transport and maturation of the polypeptide.

The protein localises to the virion membrane. Its subcellular location is the host cell membrane. In terms of biological role, class I viral fusion protein. Under the current model, the protein has at least 3 conformational states: pre-fusion native state, pre-hairpin intermediate state, and post-fusion hairpin state. During viral and plasma cell membrane fusion, the heptad repeat (HR) regions assume a trimer-of-hairpins structure, positioning the fusion peptide in close proximity to the C-terminal region of the ectodomain. The formation of this structure appears to drive apposition and subsequent fusion of viral and plasma cell membranes. Directs fusion of viral and cellular membranes leading to delivery of the nucleocapsid into the cytoplasm. This fusion is pH independent and occurs directly at the outer cell membrane. The trimer of F1-F2 (F protein) probably interacts with HN at the virion surface. Upon HN binding to its cellular receptor, the hydrophobic fusion peptide is unmasked and interacts with the cellular membrane, inducing the fusion between cell and virion membranes. Later in infection, F proteins expressed at the plasma membrane of infected cells could mediate fusion with adjacent cells to form syncytia, a cytopathic effect that could lead to tissue necrosis. The chain is Fusion glycoprotein F0 (F) from Homo sapiens (Human).